The sequence spans 931 residues: Bifunctional uridylyltransferase/uridylyl-removing enzyme (931 aa).

A uridylyltransferase region spans residues 1-383 (MDSVTPNSRP…KTGNSWRRVP (383 aa)). Positions 384-739 (ESDDFIVDNN…VGFDPARGVT (356 aa)) are uridylyl-removing. The region spanning 499 to 622 (VDEHLIRCIG…VQSVEQMKLL (124 aa)) is the HD domain. ACT domains are found at residues 740–822 (ELTI…AVAR) and 851–931 (VIEV…QPAA).

Belongs to the GlnD family. Requires Mg(2+) as cofactor.

It catalyses the reaction [protein-PII]-L-tyrosine + UTP = [protein-PII]-uridylyl-L-tyrosine + diphosphate. The catalysed reaction is [protein-PII]-uridylyl-L-tyrosine + H2O = [protein-PII]-L-tyrosine + UMP + H(+). Its activity is regulated as follows. Uridylyltransferase (UTase) activity is inhibited by glutamine, while glutamine activates uridylyl-removing (UR) activity. Modifies, by uridylylation and deuridylylation, the PII regulatory proteins (GlnB and homologs), in response to the nitrogen status of the cell that GlnD senses through the glutamine level. Under low glutamine levels, catalyzes the conversion of the PII proteins and UTP to PII-UMP and PPi, while under higher glutamine levels, GlnD hydrolyzes PII-UMP to PII and UMP (deuridylylation). Thus, controls uridylylation state and activity of the PII proteins, and plays an important role in the regulation of nitrogen fixation and metabolism. The sequence is that of Bifunctional uridylyltransferase/uridylyl-removing enzyme from Bradyrhizobium sp. (strain BTAi1 / ATCC BAA-1182).